Here is a 385-residue protein sequence, read N- to C-terminus: Glucans biosynthesis protein C (385 aa).

10 consecutive transmembrane segments (helical) span residues 17–37 (AWLM…SHTW), 60–80 (MQVF…RYPL), 91–111 (VGIP…IMLQ), 137–157 (ISHL…VWIF), 173–193 (KFSM…YAVI), 212–232 (FIVM…LAFI), 239–259 (LFTT…VAYL), 274–294 (TESV…FSFG), 311–331 (ASLF…AYIT), and 338–358 (WLGF…LYEI).

The protein belongs to the acyltransferase 3 family. OpgC subfamily.

The protein localises to the cell membrane. It participates in glycan metabolism; osmoregulated periplasmic glucan (OPG) biosynthesis. Its function is as follows. Necessary for the succinyl substitution of periplasmic glucans. Could catalyze the transfer of succinyl residues from the cytoplasmic side of the membrane to the nascent glucan backbones on the periplasmic side of the membrane. In Escherichia coli O6:K15:H31 (strain 536 / UPEC), this protein is Glucans biosynthesis protein C.